The following is a 464-amino-acid chain: tRNA modification GTPase MnmE (464 aa).

3 residues coordinate (6S)-5-formyl-5,6,7,8-tetrahydrofolate: R27, E89, and R128. Positions 225 to 384 (GLATAIVGRP…LEETIAHLFF (160 aa)) constitute a TrmE-type G domain. N235 lines the K(+) pocket. GTP contacts are provided by residues 235 to 240 (NVGKSS), 254 to 260 (TDVAGTT), and 279 to 282 (DTAG). S239 lines the Mg(2+) pocket. K(+) contacts are provided by T254, V256, and T259. T260 contacts Mg(2+). Residue K464 coordinates (6S)-5-formyl-5,6,7,8-tetrahydrofolate.

It belongs to the TRAFAC class TrmE-Era-EngA-EngB-Septin-like GTPase superfamily. TrmE GTPase family. Homodimer. Heterotetramer of two MnmE and two MnmG subunits. K(+) serves as cofactor.

It is found in the cytoplasm. Exhibits a very high intrinsic GTPase hydrolysis rate. Involved in the addition of a carboxymethylaminomethyl (cmnm) group at the wobble position (U34) of certain tRNAs, forming tRNA-cmnm(5)s(2)U34. This Levilactobacillus brevis (strain ATCC 367 / BCRC 12310 / CIP 105137 / JCM 1170 / LMG 11437 / NCIMB 947 / NCTC 947) (Lactobacillus brevis) protein is tRNA modification GTPase MnmE.